A 138-amino-acid polypeptide reads, in one-letter code: Small ribosomal subunit protein uS11c (138 aa).

The disordered stretch occupies residues 1 to 25; the sequence is MAKSIPRTGSRRNVRSGSRKSTRRI. Residues 9–25 are compositionally biased toward basic residues; that stretch reads GSRRNVRSGSRKSTRRI.

The protein belongs to the universal ribosomal protein uS11 family. As to quaternary structure, part of the 30S ribosomal subunit.

The protein resides in the plastid. It localises to the chloroplast. The sequence is that of Small ribosomal subunit protein uS11c from Eucalyptus globulus subsp. globulus (Tasmanian blue gum).